Here is a 448-residue protein sequence, read N- to C-terminus: B-cell lymphoma 3 protein homolog (448 aa).

Residues 1–54 form a disordered region; it reads MPRCPAGAMDEGPVDLRTRPKGTPGAALPLRKRPLRPASPEPATTRSPAGPLDA. A Phosphoserine modification is found at Ser39. ANK repeat units lie at residues 129 to 161, 166 to 195, 199 to 228, 236 to 265, 270 to 299, 303 to 332, and 333 to 362; these read DGDT…REVD, LRQT…SPMA, HGQT…SGSV, EGLT…DIDA, SGRS…NVNA, SGSS…DSGL, and KNCH…RAAS. Residues 356-448 form a disordered region; that stretch reads KASRAASGSQ…VPPSPAPGSS (93 aa). Positions 361-376 are enriched in polar residues; it reads ASGSQPEPSPDQSATN. Residue Ser369 is modified to Phosphoserine. Residues 377–398 show a composition bias toward low complexity; sequence SPESSSRLSSNGLQSSPSSSPS. A phosphoserine; by GSK3 mark is found at Ser396 and Ser400. A compositionally biased stretch (polar residues) spans 411-423; that stretch reads TPQNFFLPTTSTP. Low complexity predominate over residues 425–436; it reads FLPFPGVLRGPG. Over residues 437-448 the composition is skewed to pro residues; the sequence is RPVPPSPAPGSS.

Component of a complex consisting of the NF-kappa-B p52-p52 homodimer and BCL3. Component of a complex consisting of the NF-kappa-B p50-p50 homodimer and BCL3. Interacts with N4BP2, COPS5 and PIR. Interacts with CYLD. In terms of processing, polyubiquitinated. Ubiquitination via 'Lys-63'-linked ubiquitin chains is required for nuclear accumulation. Deubiquitinated by CYLD, which acts on 'Lys-63'-linked ubiquitin chains. Deubiquitination by CYLD prevents nuclear accumulation. Activated by phosphorylation.

The protein localises to the nucleus. It is found in the cytoplasm. The protein resides in the perinuclear region. Contributes to the regulation of transcriptional activation of NF-kappa-B target genes. In the cytoplasm, inhibits the nuclear translocation of the NF-kappa-B p50 subunit. In the nucleus, acts as a transcriptional activator that promotes transcription of NF-kappa-B target genes. Contributes to the regulation of cell proliferation. In Mus musculus (Mouse), this protein is B-cell lymphoma 3 protein homolog (Bcl3).